The primary structure comprises 100 residues: Putative pterin-4-alpha-carbinolamine dehydratase (100 aa).

This sequence belongs to the pterin-4-alpha-carbinolamine dehydratase family.

It carries out the reaction (4aS,6R)-4a-hydroxy-L-erythro-5,6,7,8-tetrahydrobiopterin = (6R)-L-erythro-6,7-dihydrobiopterin + H2O. The sequence is that of Putative pterin-4-alpha-carbinolamine dehydratase from Rhodopseudomonas palustris (strain TIE-1).